We begin with the raw amino-acid sequence, 591 residues long: Aspartate--tRNA(Asp/Asn) ligase (591 aa).

Glutamate 174 contacts L-aspartate. The tract at residues 198-201 (QLFK) is aspartate. An L-aspartate-binding site is contributed by arginine 220. Residues 220–222 (RDE) and glutamine 229 each bind ATP. Histidine 450 provides a ligand contact to L-aspartate. An ATP-binding site is contributed by glutamate 483. Arginine 490 contributes to the L-aspartate binding site. Position 535 to 538 (535 to 538 (GLDR)) interacts with ATP.

The protein belongs to the class-II aminoacyl-tRNA synthetase family. Type 1 subfamily. In terms of assembly, homodimer.

Its subcellular location is the cytoplasm. The catalysed reaction is tRNA(Asx) + L-aspartate + ATP = L-aspartyl-tRNA(Asx) + AMP + diphosphate. In terms of biological role, aspartyl-tRNA synthetase with relaxed tRNA specificity since it is able to aspartylate not only its cognate tRNA(Asp) but also tRNA(Asn). Reaction proceeds in two steps: L-aspartate is first activated by ATP to form Asp-AMP and then transferred to the acceptor end of tRNA(Asp/Asn). In Pseudomonas savastanoi pv. phaseolicola (strain 1448A / Race 6) (Pseudomonas syringae pv. phaseolicola (strain 1448A / Race 6)), this protein is Aspartate--tRNA(Asp/Asn) ligase.